The following is a 193-amino-acid chain: Holliday junction branch migration complex subunit RuvA (193 aa).

The segment at 1–64 (MIGRIAGVLL…EDAHLLYGFG (64 aa)) is domain I. Residues 65–139 (TAEERSTFRE…GKIGADLGAM (75 aa)) are domain II. The tract at residues 139–143 (MAGAA) is flexible linker. Residues 144–193 (SASDHASDILNALLALGYSEKEALTAVKNVPAGTGVSEGIKLALKALSKG) form a domain III region.

Belongs to the RuvA family. In terms of assembly, homotetramer. Forms an RuvA(8)-RuvB(12)-Holliday junction (HJ) complex. HJ DNA is sandwiched between 2 RuvA tetramers; dsDNA enters through RuvA and exits via RuvB. An RuvB hexamer assembles on each DNA strand where it exits the tetramer. Each RuvB hexamer is contacted by two RuvA subunits (via domain III) on 2 adjacent RuvB subunits; this complex drives branch migration. In the full resolvosome a probable DNA-RuvA(4)-RuvB(12)-RuvC(2) complex forms which resolves the HJ.

Its subcellular location is the cytoplasm. In terms of biological role, the RuvA-RuvB-RuvC complex processes Holliday junction (HJ) DNA during genetic recombination and DNA repair, while the RuvA-RuvB complex plays an important role in the rescue of blocked DNA replication forks via replication fork reversal (RFR). RuvA specifically binds to HJ cruciform DNA, conferring on it an open structure. The RuvB hexamer acts as an ATP-dependent pump, pulling dsDNA into and through the RuvAB complex. HJ branch migration allows RuvC to scan DNA until it finds its consensus sequence, where it cleaves and resolves the cruciform DNA. This is Holliday junction branch migration complex subunit RuvA from Paraburkholderia phytofirmans (strain DSM 17436 / LMG 22146 / PsJN) (Burkholderia phytofirmans).